The chain runs to 62 residues: UPF0434 protein Arad_4458 (62 aa).

Belongs to the UPF0434 family.

This chain is UPF0434 protein Arad_4458, found in Rhizobium rhizogenes (strain K84 / ATCC BAA-868) (Agrobacterium radiobacter).